The primary structure comprises 246 residues: MLLIPAIDLKDGKCVRLKQGRMEDDTVFSEDPVAVASHWVERGARRLHLVDLNGAFAGEPVNGDIVKAIAKAHPDLPIQIGGGIRSPEIIQAYLDAGVQWVIIGTKAVNEPAFVKAMCEQFPGHIIVGLDAKDGKVATDGWANVTDVDVIDLAKQFENDGVSAIVYTDISRDGMLQGVNVDATVRLAQSMSIPVIASGGITNLDDVRNLCAVADQGISGAITGRAIYENTLDFADGQALSDELSGA.

Residue Asp-8 is the Proton acceptor of the active site. The Proton donor role is filled by Asp-130.

This sequence belongs to the HisA/HisF family.

It localises to the cytoplasm. It catalyses the reaction 1-(5-phospho-beta-D-ribosyl)-5-[(5-phospho-beta-D-ribosylamino)methylideneamino]imidazole-4-carboxamide = 5-[(5-phospho-1-deoxy-D-ribulos-1-ylimino)methylamino]-1-(5-phospho-beta-D-ribosyl)imidazole-4-carboxamide. It functions in the pathway amino-acid biosynthesis; L-histidine biosynthesis; L-histidine from 5-phospho-alpha-D-ribose 1-diphosphate: step 4/9. The chain is 1-(5-phosphoribosyl)-5-[(5-phosphoribosylamino)methylideneamino] imidazole-4-carboxamide isomerase from Alcanivorax borkumensis (strain ATCC 700651 / DSM 11573 / NCIMB 13689 / SK2).